The primary structure comprises 310 residues: tRNA dimethylallyltransferase (310 aa).

24–31 (GPTASGKT) lines the ATP pocket. 26–31 (TASGKT) serves as a coordination point for substrate. The segment at 49–52 (DSRQ) is interaction with substrate tRNA.

This sequence belongs to the IPP transferase family. In terms of assembly, monomer. Mg(2+) is required as a cofactor.

It catalyses the reaction adenosine(37) in tRNA + dimethylallyl diphosphate = N(6)-dimethylallyladenosine(37) in tRNA + diphosphate. In terms of biological role, catalyzes the transfer of a dimethylallyl group onto the adenine at position 37 in tRNAs that read codons beginning with uridine, leading to the formation of N6-(dimethylallyl)adenosine (i(6)A). The polypeptide is tRNA dimethylallyltransferase (Synechococcus sp. (strain CC9311)).